Consider the following 469-residue polypeptide: Exodeoxyribonuclease 7 large subunit (469 aa).

Belongs to the XseA family. Heterooligomer composed of large and small subunits.

It is found in the cytoplasm. The catalysed reaction is Exonucleolytic cleavage in either 5'- to 3'- or 3'- to 5'-direction to yield nucleoside 5'-phosphates.. Its function is as follows. Bidirectionally degrades single-stranded DNA into large acid-insoluble oligonucleotides, which are then degraded further into small acid-soluble oligonucleotides. This Mycoplasma mycoides subsp. mycoides SC (strain CCUG 32753 / NCTC 10114 / PG1) protein is Exodeoxyribonuclease 7 large subunit.